A 625-amino-acid polypeptide reads, in one-letter code: Phosphomethylpyrimidine synthase (625 aa).

Substrate-binding positions include asparagine 230, methionine 259, tyrosine 288, histidine 324, 344-346, 385-388, and glutamate 424; these read SRG and DGLR. A Zn(2+)-binding site is contributed by histidine 428. A substrate-binding site is contributed by tyrosine 451. Histidine 492 is a Zn(2+) binding site. [4Fe-4S] cluster-binding residues include cysteine 572, cysteine 575, and cysteine 580.

This sequence belongs to the ThiC family. As to quaternary structure, homodimer. The cofactor is [4Fe-4S] cluster.

The enzyme catalyses 5-amino-1-(5-phospho-beta-D-ribosyl)imidazole + S-adenosyl-L-methionine = 4-amino-2-methyl-5-(phosphooxymethyl)pyrimidine + CO + 5'-deoxyadenosine + formate + L-methionine + 3 H(+). It functions in the pathway cofactor biosynthesis; thiamine diphosphate biosynthesis. Its function is as follows. Catalyzes the synthesis of the hydroxymethylpyrimidine phosphate (HMP-P) moiety of thiamine from aminoimidazole ribotide (AIR) in a radical S-adenosyl-L-methionine (SAM)-dependent reaction. This Xanthomonas axonopodis pv. citri (strain 306) protein is Phosphomethylpyrimidine synthase.